Reading from the N-terminus, the 141-residue chain is Large ribosomal subunit protein uL11 (141 aa).

It belongs to the universal ribosomal protein uL11 family. As to quaternary structure, part of the ribosomal stalk of the 50S ribosomal subunit. Interacts with L10 and the large rRNA to form the base of the stalk. L10 forms an elongated spine to which L12 dimers bind in a sequential fashion forming a multimeric L10(L12)X complex. Post-translationally, one or more lysine residues are methylated.

In terms of biological role, forms part of the ribosomal stalk which helps the ribosome interact with GTP-bound translation factors. The sequence is that of Large ribosomal subunit protein uL11 from Ligilactobacillus salivarius (strain UCC118) (Lactobacillus salivarius).